Here is a 245-residue protein sequence, read N- to C-terminus: Biosynthetic peptidoglycan transglycosylase (245 aa).

Residues valine 20–alanine 42 form a helical membrane-spanning segment.

It belongs to the glycosyltransferase 51 family.

It is found in the cell inner membrane. It catalyses the reaction [GlcNAc-(1-&gt;4)-Mur2Ac(oyl-L-Ala-gamma-D-Glu-L-Lys-D-Ala-D-Ala)](n)-di-trans,octa-cis-undecaprenyl diphosphate + beta-D-GlcNAc-(1-&gt;4)-Mur2Ac(oyl-L-Ala-gamma-D-Glu-L-Lys-D-Ala-D-Ala)-di-trans,octa-cis-undecaprenyl diphosphate = [GlcNAc-(1-&gt;4)-Mur2Ac(oyl-L-Ala-gamma-D-Glu-L-Lys-D-Ala-D-Ala)](n+1)-di-trans,octa-cis-undecaprenyl diphosphate + di-trans,octa-cis-undecaprenyl diphosphate + H(+). The protein operates within cell wall biogenesis; peptidoglycan biosynthesis. In terms of biological role, peptidoglycan polymerase that catalyzes glycan chain elongation from lipid-linked precursors. The protein is Biosynthetic peptidoglycan transglycosylase of Burkholderia ambifaria (strain ATCC BAA-244 / DSM 16087 / CCUG 44356 / LMG 19182 / AMMD) (Burkholderia cepacia (strain AMMD)).